Consider the following 612-residue polypeptide: Indole-3-acetic acid-amido synthetase GH3.6 (612 aa).

This sequence belongs to the IAA-amido conjugating enzyme family. As to expression, expressed in cotyledons, stipules, true leaves, hypocotyls, and all parts of the roots. Not detected in flowers.

In terms of biological role, catalyzes the synthesis of indole-3-acetic acid (IAA)-amino acid conjugates, providing a mechanism for the plant to cope with the presence of excess auxin. Strongly reactive with Glu, Gln, Trp, Asp, Ala, Leu, Phe, Gly, Tyr, Met, Ile and Val. Little or no product formation with His, Ser, Thr, Arg, Lys, or Cys. Also active on pyruvic and butyric acid analogs of IAA, PAA and the synthetic auxin naphthaleneacetic acid (NAA). The two chlorinated synthetic auxin herbicides 2,4-D and 3,6-dichloro-o-anisic acid (dicamba) cannot be used as substrates. Involved in auxin signal transduction. Inhibits shoot and hypocotyl cell elongation, and lateral root cell differentiation in light. The chain is Indole-3-acetic acid-amido synthetase GH3.6 (GH3.6) from Arabidopsis thaliana (Mouse-ear cress).